The following is a 761-amino-acid chain: uncharacterized protein (761 aa).

Position 1 is an N-acetylmethionine (M1). Disordered regions lie at residues M1 to S82, S229 to A320, and F590 to Q640. Over residues N13–L27 the composition is skewed to polar residues. Positions P28–T45 are enriched in low complexity. 4 stretches are compositionally biased toward polar residues: residues T244–E259, N266–H276, F590–D604, and S627–Q640.

Phosphorylated by CDC28.

This is an uncharacterized protein from Saccharomyces cerevisiae (strain ATCC 204508 / S288c) (Baker's yeast).